Here is a 377-residue protein sequence, read N- to C-terminus: Dihydroorotate dehydrogenase (quinone) (377 aa).

FMN contacts are provided by residues Ala-82–Lys-86 and Thr-106. Lys-86 contributes to the substrate binding site. Asn-131 to Phe-135 lines the substrate pocket. 2 residues coordinate FMN: Asn-159 and Asn-192. Asn-192 lines the substrate pocket. Ser-195 (nucleophile) is an active-site residue. Position 197 (Asn-197) interacts with substrate. Residues Lys-228 and Thr-256 each contribute to the FMN site. A substrate-binding site is contributed by Asn-257 to Thr-258. Residues Gly-282, Gly-311, and Tyr-332–Thr-333 contribute to the FMN site.

It belongs to the dihydroorotate dehydrogenase family. Type 2 subfamily. Monomer. Requires FMN as cofactor.

The protein resides in the cell membrane. The enzyme catalyses (S)-dihydroorotate + a quinone = orotate + a quinol. Its pathway is pyrimidine metabolism; UMP biosynthesis via de novo pathway; orotate from (S)-dihydroorotate (quinone route): step 1/1. In terms of biological role, catalyzes the conversion of dihydroorotate to orotate with quinone as electron acceptor. The protein is Dihydroorotate dehydrogenase (quinone) of Corynebacterium efficiens (strain DSM 44549 / YS-314 / AJ 12310 / JCM 11189 / NBRC 100395).